Consider the following 459-residue polypeptide: tRNA modification GTPase MnmE (459 aa).

The (6S)-5-formyl-5,6,7,8-tetrahydrofolate site is built by arginine 22, glutamate 85, and arginine 124. One can recognise a TrmE-type G domain in the interval 221–380 (GLSTVIVGKP…LEIQIRDLFF (160 aa)). Asparagine 231 contributes to the K(+) binding site. Residues 231–236 (NVGKSS), 250–256 (TEVAGTT), and 275–278 (DTAG) each bind GTP. Serine 235 is a Mg(2+) binding site. Positions 250, 252, and 255 each coordinate K(+). Position 256 (threonine 256) interacts with Mg(2+). Position 459 (lysine 459) interacts with (6S)-5-formyl-5,6,7,8-tetrahydrofolate.

It belongs to the TRAFAC class TrmE-Era-EngA-EngB-Septin-like GTPase superfamily. TrmE GTPase family. In terms of assembly, homodimer. Heterotetramer of two MnmE and two MnmG subunits. It depends on K(+) as a cofactor.

The protein localises to the cytoplasm. In terms of biological role, exhibits a very high intrinsic GTPase hydrolysis rate. Involved in the addition of a carboxymethylaminomethyl (cmnm) group at the wobble position (U34) of certain tRNAs, forming tRNA-cmnm(5)s(2)U34. In Staphylococcus aureus (strain MW2), this protein is tRNA modification GTPase MnmE.